Here is a 243-residue protein sequence, read N- to C-terminus: 1-(5-phosphoribosyl)-5-[(5-phosphoribosylamino)methylideneamino] imidazole-4-carboxamide isomerase (243 aa).

The Proton acceptor role is filled by D8. The Proton donor role is filled by D130.

The protein belongs to the HisA/HisF family.

The protein resides in the cytoplasm. The enzyme catalyses 1-(5-phospho-beta-D-ribosyl)-5-[(5-phospho-beta-D-ribosylamino)methylideneamino]imidazole-4-carboxamide = 5-[(5-phospho-1-deoxy-D-ribulos-1-ylimino)methylamino]-1-(5-phospho-beta-D-ribosyl)imidazole-4-carboxamide. It participates in amino-acid biosynthesis; L-histidine biosynthesis; L-histidine from 5-phospho-alpha-D-ribose 1-diphosphate: step 4/9. This is 1-(5-phosphoribosyl)-5-[(5-phosphoribosylamino)methylideneamino] imidazole-4-carboxamide isomerase from Acinetobacter baumannii (strain SDF).